The chain runs to 146 residues: VHLTPDEKNAVTALWGKVNVDEVGGEALGRLLVVYPWTQRFFDSFGDLSTADAVMGNPKVKAHGKKVLGAFSDGLAHLDNLKGTFAQLSELHCDKLHVDPENFKLLGNVLVCVLAHHFGKEFTPQVQAAYQKVVAGVANALAHKYH.

V1 carries the N-acetylvaline modification. In terms of domain architecture, Globin spans 2–146 (HLTPDEKNAV…VANALAHKYH (145 aa)). T12 bears the Phosphothreonine mark. Phosphoserine is present on S44. The residue at position 59 (K59) is an N6-acetyllysine. H63 is a heme b binding site. Position 82 is an N6-acetyllysine (K82). Residue H92 coordinates heme b. C93 is subject to S-nitrosocysteine. An N6-acetyllysine modification is found at K144.

The protein belongs to the globin family. As to quaternary structure, heterotetramer of two alpha chains and two beta chains. As to expression, red blood cells.

Functionally, involved in oxygen transport from the lung to the various peripheral tissues. The protein is Hemoglobin subunit beta (HBB) of Piliocolobus badius (Western red colobus).